The primary structure comprises 120 residues: MALDTEKIIEELKGASILELNDLVKAIEDEFDVTAAAPVAAAGAAGAAEAKSSFDVELTEAGQEKVKVIKVVRDITGLGLKDSKDLVDGAPKNVKEGVSEDEANDIKAKLEEVGATVTLK.

Belongs to the bacterial ribosomal protein bL12 family. Homodimer. Part of the ribosomal stalk of the 50S ribosomal subunit. Forms a multimeric L10(L12)X complex, where L10 forms an elongated spine to which 2 to 4 L12 dimers bind in a sequential fashion. Binds GTP-bound translation factors.

In terms of biological role, forms part of the ribosomal stalk which helps the ribosome interact with GTP-bound translation factors. Is thus essential for accurate translation. The chain is Large ribosomal subunit protein bL12 from Lactobacillus acidophilus (strain ATCC 700396 / NCK56 / N2 / NCFM).